The primary structure comprises 251 residues: MSVSPVSIVSTPVAVSESPAGSPVQPAVPVTVRWRGSEAYQTSFDAMRAFTDTRTADTGDEIWVVEHPPVYTLGQAGDPAHLLVADSGVPLVKVDRGGQITYHGPGQIVVYLLLDLRRRKLMVRTLVTKIEEAVIETLAAYNLASVRKAGAPGIYVASGVHEGAKIAALGLKIRNGCSYHGLSLNVKMDLRPFLAINPCGYAGLETVDMASLEVAADWNDVAHTLVGRLIANLDGESAAADKPQALEHSND.

The BPL/LPL catalytic domain maps to 56–237 (ADTGDEIWVV…RLIANLDGES (182 aa)). Residues 96–103 (RGGQITYH), 168–170 (ALG), and 181–183 (GLS) contribute to the substrate site. C199 (acyl-thioester intermediate) is an active-site residue.

Belongs to the LipB family.

It localises to the cytoplasm. It carries out the reaction octanoyl-[ACP] + L-lysyl-[protein] = N(6)-octanoyl-L-lysyl-[protein] + holo-[ACP] + H(+). The protein operates within protein modification; protein lipoylation via endogenous pathway; protein N(6)-(lipoyl)lysine from octanoyl-[acyl-carrier-protein]: step 1/2. In terms of biological role, catalyzes the transfer of endogenously produced octanoic acid from octanoyl-acyl-carrier-protein onto the lipoyl domains of lipoate-dependent enzymes. Lipoyl-ACP can also act as a substrate although octanoyl-ACP is likely to be the physiological substrate. This chain is Octanoyltransferase, found in Burkholderia ambifaria (strain ATCC BAA-244 / DSM 16087 / CCUG 44356 / LMG 19182 / AMMD) (Burkholderia cepacia (strain AMMD)).